The primary structure comprises 84 residues: Acyl carrier protein (84 aa).

The Carrier domain maps to 4-79 (NEIFEKVQDI…EVVDFIKSKL (76 aa)). Residue Ser39 is modified to O-(pantetheine 4'-phosphoryl)serine.

This sequence belongs to the acyl carrier protein (ACP) family. In terms of processing, 4'-phosphopantetheine is transferred from CoA to a specific serine of apo-ACP by AcpS. This modification is essential for activity because fatty acids are bound in thioester linkage to the sulfhydryl of the prosthetic group.

The protein localises to the plastid. It is found in the chloroplast. The protein operates within lipid metabolism; fatty acid biosynthesis. Carrier of the growing fatty acid chain in fatty acid biosynthesis. This Porphyra purpurea (Red seaweed) protein is Acyl carrier protein.